A 427-amino-acid polypeptide reads, in one-letter code: Peptidase B (427 aa).

Positions 195 and 200 each coordinate Mn(2+). Residue K207 is part of the active site. Positions 218, 277, and 279 each coordinate Mn(2+). Residue R281 is part of the active site.

The protein belongs to the peptidase M17 family. As to quaternary structure, homohexamer. Mn(2+) is required as a cofactor.

It is found in the cytoplasm. It carries out the reaction Release of an N-terminal amino acid, Xaa, from a peptide or arylamide. Xaa is preferably Glu or Asp but may be other amino acids, including Leu, Met, His, Cys and Gln.. Functionally, probably plays an important role in intracellular peptide degradation. In Salmonella typhi, this protein is Peptidase B.